A 658-amino-acid chain; its full sequence is Threonine--tRNA ligase (658 aa).

In terms of domain architecture, TGS spans 1–64 (MSNTVSLQFP…GASGKVEIIT (64 aa)). Residues 246–548 (DHRRLGREMD…LIENFAGHMP (303 aa)) are catalytic. 3 residues coordinate Zn(2+): C343, H394, and H525.

The protein belongs to the class-II aminoacyl-tRNA synthetase family. In terms of assembly, homodimer. Requires Zn(2+) as cofactor.

It localises to the cytoplasm. It carries out the reaction tRNA(Thr) + L-threonine + ATP = L-threonyl-tRNA(Thr) + AMP + diphosphate + H(+). In terms of biological role, catalyzes the attachment of threonine to tRNA(Thr) in a two-step reaction: L-threonine is first activated by ATP to form Thr-AMP and then transferred to the acceptor end of tRNA(Thr). Also edits incorrectly charged L-seryl-tRNA(Thr). This Brucella melitensis biotype 2 (strain ATCC 23457) protein is Threonine--tRNA ligase.